The primary structure comprises 95 residues: Aspartyl/glutamyl-tRNA(Asn/Gln) amidotransferase subunit C (95 aa).

The protein belongs to the GatC family. As to quaternary structure, heterotrimer of A, B and C subunits.

The enzyme catalyses L-glutamyl-tRNA(Gln) + L-glutamine + ATP + H2O = L-glutaminyl-tRNA(Gln) + L-glutamate + ADP + phosphate + H(+). It catalyses the reaction L-aspartyl-tRNA(Asn) + L-glutamine + ATP + H2O = L-asparaginyl-tRNA(Asn) + L-glutamate + ADP + phosphate + 2 H(+). Allows the formation of correctly charged Asn-tRNA(Asn) or Gln-tRNA(Gln) through the transamidation of misacylated Asp-tRNA(Asn) or Glu-tRNA(Gln) in organisms which lack either or both of asparaginyl-tRNA or glutaminyl-tRNA synthetases. The reaction takes place in the presence of glutamine and ATP through an activated phospho-Asp-tRNA(Asn) or phospho-Glu-tRNA(Gln). This chain is Aspartyl/glutamyl-tRNA(Asn/Gln) amidotransferase subunit C, found in Nitrosospira multiformis (strain ATCC 25196 / NCIMB 11849 / C 71).